Here is a 520-residue protein sequence, read N- to C-terminus: Ubiquitin carboxyl-terminal hydrolase 3 (520 aa).

Met-1 bears the N-acetylmethionine mark. The UBP-type zinc finger occupies 1-121 (MECPHLSSSV…QKVREHLQNL (121 aa)). 12 residues coordinate Zn(2+): Cys-3, His-5, Cys-29, Cys-32, Cys-41, Cys-44, Cys-49, His-56, His-60, His-82, Cys-95, and Cys-98. The 353-residue stretch at 159-511 (TGLRNLGNTC…KAYILFYVER (353 aa)) folds into the USP domain. Cys-168 serves as the catalytic Nucleophile. His-471 functions as the Proton acceptor in the catalytic mechanism.

The protein belongs to the peptidase C19 family. USP3 subfamily. As to quaternary structure, interacts (via UBP-type domain) with H2A; the interaction is less efficient than with monoubiquitinated H2A.

Its subcellular location is the nucleus. It is found in the cytoplasm. It carries out the reaction Thiol-dependent hydrolysis of ester, thioester, amide, peptide and isopeptide bonds formed by the C-terminal Gly of ubiquitin (a 76-residue protein attached to proteins as an intracellular targeting signal).. Its function is as follows. Deubiquitinase that plays a role in several cellular processes including transcriptional regulation, cell cycle progression or innate immunity. In response to DNA damage, deubiquitinates monoubiquitinated target proteins such as histone H2A and H2AX and thereby counteracts RNF168- and RNF8-mediated ubiquitination. In turn, participates in the recruitment of DNA damage repair factors to DNA break sites. Required for proper progression through S phase and subsequent mitotic entry. Acts as a positive regulator of TP53 by deubiquitinating and stabilizing it to promote normal cell proliferation and transformation. Participates in establishing tolerance innate immune memory through non-transcriptional feedback. Mechanistically, negatively regulates TLR-induced NF-kappa-B signaling by targeting and removing the 'Lys-63'-linked polyubiquitin chains on MYD88. Negatively regulates the activation of type I interferon signaling by mediating 'Lys-63'-linked polyubiquitin chains on RIGI and IFIH1. Also deubiquinates ASC/PYCARD, the central adapter mediating the assembly and activation of most inflammasomes, and thereby promotes inflammasome activation. This Mus musculus (Mouse) protein is Ubiquitin carboxyl-terminal hydrolase 3 (Usp3).